Reading from the N-terminus, the 1575-residue chain is Laminin subunit gamma-3 (1575 aa).

Positions 1–19 (MAAAALLLGLALLAPRAAG) are cleaved as a signal peptide. The region spanning 31-270 (RPQRCLPVFE…AVSDFSVGGR (240 aa)) is the Laminin N-terminal domain. Asn87 and Asn119 each carry an N-linked (GlcNAc...) asparagine glycan. 16 disulfides stabilise this stretch: Cys271–Cys280, Cys273–Cys290, Cys292–Cys301, Cys304–Cys324, Cys327–Cys336, Cys329–Cys352, Cys355–Cys364, Cys367–Cys380, Cys383–Cys395, Cys385–Cys401, Cys403–Cys412, Cys415–Cys427, Cys430–Cys441, Cys432–Cys448, Cys450–Cys459, and Cys462–Cys477. Laminin EGF-like domains are found at residues 271 to 326 (CKCN…ECLP), 327 to 382 (CNCS…PCQP), 383 to 429 (CDCQ…GCRP), and 430 to 479 (CTCN…GCSS). Asn295 is a glycosylation site (N-linked (GlcNAc...) asparagine). The N-linked (GlcNAc...) asparagine glycan is linked to Asn328. Residues 480–489 (CFCYGHSKVC) enclose the Laminin EGF-like 5; first part domain. A Laminin IV type A domain is found at 499–672 (HILSDFHQGA…LSPPASWVEI (174 aa)). Residue Asn631 is glycosylated (N-linked (GlcNAc...) asparagine). The region spanning 673–706 (CSCPTGYTGQFCESCAPGYKREMPQGGPYASCVP) is the Laminin EGF-like 5; second part domain. 24 disulfide bridges follow: Cys707–Cys715, Cys709–Cys722, Cys724–Cys733, Cys736–Cys752, Cys755–Cys763, Cys757–Cys774, Cys777–Cys786, Cys789–Cys807, Cys810–Cys824, Cys812–Cys831, Cys834–Cys843, Cys846–Cys863, Cys866–Cys880, Cys868–Cys887, Cys889–Cys898, Cys901–Cys914, Cys917–Cys929, Cys919–Cys936, Cys938–Cys947, Cys950–Cys962, Cys965–Cys977, Cys967–Cys983, Cys985–Cys994, and Cys997–Cys1010. Laminin EGF-like domains are found at residues 707 to 754 (CTCN…DCQP), 755 to 809 (CPCP…PCHQ), 810 to 865 (CQCS…KCMP), 866 to 916 (CSCH…GCRS), 917 to 964 (CKCH…GCRA), and 965 to 1013 (CRCS…CQQC). A glycan (N-linked (GlcNAc...) asparagine) is linked at Asn837. Asn980 carries N-linked (GlcNAc...) asparagine glycosylation. Residues 1014-1575 (PSCYALVKEE…SLPENCASWQ (562 aa)) form a domain II and I region. The Cell attachment site motif lies at 1059 to 1061 (RGD). The stretch at 1073 to 1134 (REAFLEQMMS…SEEEILHAAA (62 aa)) forms a coiled coil. Asn1185 is a glycosylation site (N-linked (GlcNAc...) asparagine). Positions 1201 to 1228 (LETQRDLEDRYQEVQAAQKALRTAVAEV) form a coiled coil. The tract at residues 1378–1399 (KQAERMLGNAAPLSSSAKKKGR) is disordered. Coiled-coil stretches lie at residues 1410–1492 (KLAK…LARL) and 1523–1567 (GSLQ…LHSL).

As to quaternary structure, laminin is a complex glycoprotein, consisting of three different polypeptide chains (alpha, beta, gamma), which are bound to each other by disulfide bonds into a cross-shaped molecule comprising one long and three short arms with globules at each end. Gamma-3 is a subunit of laminin-12 (laminin-213), laminin-14 (laminin-423) and laminin-15 (laminin-523). In terms of tissue distribution, broadly expressed in: skin, heart, lung, and the reproductive tracts.

The protein resides in the secreted. The protein localises to the extracellular space. It localises to the extracellular matrix. It is found in the basement membrane. Its function is as follows. Binding to cells via a high affinity receptor, laminin is thought to mediate the attachment, migration and organization of cells into tissues during embryonic development by interacting with other extracellular matrix components. The sequence is that of Laminin subunit gamma-3 (LAMC3) from Homo sapiens (Human).